Reading from the N-terminus, the 52-residue chain is Protein YabQ (52 aa).

Its function is as follows. Identified as a multicopy suppressor of the slow growth phenotype of an rsgA (yjeQ) deletion mutant. The chain is Protein YabQ (yabQ) from Escherichia coli (strain K12).